The sequence spans 489 residues: uncharacterized protein (489 aa).

11 helical membrane passes run 29-49, 67-87, 90-110, 119-139, 152-172, 186-206, 276-296, 308-328, 351-371, 397-417, and 418-438; these read FIAS…TGLG, LLYA…KYLG, WALA…WYFD, IFTG…TAYI, FIAT…FIAF, AVYI…ILFI, LNNV…TLIL, IIGL…ELGW, GGAL…IVSV, AAGM…LGQG, and IIYF…TSIF.

The protein resides in the membrane. This is an uncharacterized protein from Schizosaccharomyces pombe (strain 972 / ATCC 24843) (Fission yeast).